A 537-amino-acid polypeptide reads, in one-letter code: Phosphoenolpyruvate carboxykinase (ATP) (537 aa).

3 residues coordinate substrate: R61, Y195, and K201. ATP-binding positions include K201, H220, and 236–244 (GLSGTGKTT). Residues K201 and H220 each contribute to the Mn(2+) site. D257 is a Mn(2+) binding site. Residues E285, R323, and T448 each coordinate ATP. R323 provides a ligand contact to substrate.

This sequence belongs to the phosphoenolpyruvate carboxykinase (ATP) family. Requires Mn(2+) as cofactor.

Its subcellular location is the cytoplasm. The catalysed reaction is oxaloacetate + ATP = phosphoenolpyruvate + ADP + CO2. It functions in the pathway carbohydrate biosynthesis; gluconeogenesis. Its function is as follows. Involved in the gluconeogenesis. Catalyzes the conversion of oxaloacetate (OAA) to phosphoenolpyruvate (PEP) through direct phosphoryl transfer between the nucleoside triphosphate and OAA. This chain is Phosphoenolpyruvate carboxykinase (ATP), found in Rhodopseudomonas palustris (strain BisA53).